We begin with the raw amino-acid sequence, 610 residues long: Elongation factor 4 (610 aa).

The 183-residue stretch at 7 to 189 (SRIRNFSIIA…AIVQRIPPPK (183 aa)) folds into the tr-type G domain. Residues 19 to 24 (DHGKST) and 136 to 139 (NKID) each bind GTP.

This sequence belongs to the TRAFAC class translation factor GTPase superfamily. Classic translation factor GTPase family. LepA subfamily.

The protein localises to the cell inner membrane. It carries out the reaction GTP + H2O = GDP + phosphate + H(+). Its function is as follows. Required for accurate and efficient protein synthesis under certain stress conditions. May act as a fidelity factor of the translation reaction, by catalyzing a one-codon backward translocation of tRNAs on improperly translocated ribosomes. Back-translocation proceeds from a post-translocation (POST) complex to a pre-translocation (PRE) complex, thus giving elongation factor G a second chance to translocate the tRNAs correctly. Binds to ribosomes in a GTP-dependent manner. This Thermus thermophilus (strain ATCC BAA-163 / DSM 7039 / HB27) protein is Elongation factor 4.